A 629-amino-acid chain; its full sequence is tRNA uridine 5-carboxymethylaminomethyl modification enzyme MnmG (629 aa).

Residues 13–18, Val125, and Ser180 contribute to the FAD site; that span reads GGGHAG. 273–287 provides a ligand contact to NAD(+); the sequence is GPRYCPSIEDKVMRF. Gln370 contributes to the FAD binding site.

The protein belongs to the MnmG family. As to quaternary structure, homodimer. Heterotetramer of two MnmE and two MnmG subunits. The cofactor is FAD.

The protein resides in the cytoplasm. NAD-binding protein involved in the addition of a carboxymethylaminomethyl (cmnm) group at the wobble position (U34) of certain tRNAs, forming tRNA-cmnm(5)s(2)U34. This is tRNA uridine 5-carboxymethylaminomethyl modification enzyme MnmG from Klebsiella pneumoniae subsp. pneumoniae (strain ATCC 700721 / MGH 78578).